Reading from the N-terminus, the 150-residue chain is UPF0178 protein PSEEN5341 (150 aa).

The protein belongs to the UPF0178 family.

The protein is UPF0178 protein PSEEN5341 of Pseudomonas entomophila (strain L48).